A 988-amino-acid polypeptide reads, in one-letter code: MASYTVESFVAQQLQLLELERDAEVEERRSWQEHSSLKELQSRGVCLLKLQVSGQRTGLYGQRLVTFEPRKFGPAVVLPSNSFTSGDIVGLYDTNESSQLATGVLTRITQKSVIVAFDESHDFQLNLDRENTYRLLKLANDVTYKRLKKALLTLKKYHSGPASSLIDVLLGGSTPSPATEIPPLTFYNTTLDPSQKEAVSFALAQKEVAIIHGPPGTGKTTTVVEIILQAVKQGLKVLCCAPSNIAVDNLVERLALCKKQILRLGHPARLLESVQQHSLDAVLARSDNAQIVADIRRDIDQVFGKNKKTQDKREKSNFRNEIKLLRKELKEREEAAIVQSLSAADVVLATNTGASTDGPLKLLPEDYFDVVVVDECAQALEASCWIPLLKAPKCILAGDHKQLPPTTVSHKAALAGLSRSLMERLAEKHGAAVVRMLAVQYRMHQAITRWASEAMYHGQLTAHPSVAGHLLKDLPGVADTEETSVPLLLIDTAGCGLLELEEEDSQSKGNPGEVRLVTLHIQALVDAGVQAGDIAVIAPYNLQVDLLRQSLSNKHPELEIKSVDGFQGREKEAVILTFVRSNRKGEVGFLAEDRRINVAVTRARRHVAVICDSHTVNNHAFLKTLVDYFTEHGEVRTAFEYLDDIVPENYTHEGSRSHSCAPKPKCPTTSVRKPASAQESRQEARAATGHSRRKPSEKPLGSQVQPQHSSKANGSDRTGGTDRTEHFRAMIEEFVASKEAQLEFPTSLSSHDRLRVHQLAEEFGLKHDSTGEGKARHITVSRRSPAGSGSATPQPPSPPSPAQAEPEPQVEQPVGQPHGSTQLDLKALHLERLQRQQGCQAQSQLGGGSRPQKAPQKKKKKEPKGPAMALPSEEDFDALVSAVVKADNTCSFTKCSASTTTLGQFCMHCSRRYCLSHHLPEIHGCGEKARAHARQRISREGVLYAGSGTKDRALDPAKRAQLQRKLDKKLGELSSQRTSKKKEKERGT.

Residue Ala-2 is modified to N-acetylalanine. Residues 213–220, Gln-402, Tyr-441, and Glu-570 contribute to the ATP site; that span reads GPPGTGKT. The SS DNA-binding stretch occupies residues 637 to 783; that stretch reads TAFEYLDDIV…KARHITVSRR (147 aa). Disordered regions lie at residues 651–722, 765–820, and 835–872; these read THEG…GGTD, LKHD…PHGS, and RQQG…ALPS. Residues 702–718 show a composition bias toward polar residues; the sequence is SQVQPQHSSKANGSDRT. The region spanning 721–784 is the R3H domain; sequence TDRTEHFRAM…ARHITVSRRS (64 aa). Residues 765-775 show a composition bias toward basic and acidic residues; that stretch reads LKHDSTGEGKA. Ser-797 and Ser-800 each carry phosphoserine. Residues 802-817 are compositionally biased toward low complexity; sequence AQAEPEPQVEQPVGQP. The span at 835–844 shows a compositional bias: polar residues; the sequence is RQQGCQAQSQ. Residues 857–861 carry the Nuclear localization signal motif; the sequence is KKKKK. Residues 884–933 form an AN1-type zinc finger; that stretch reads VKADNTCSFTKCSASTTTLGQFCMHCSRRYCLSHHLPEIHGCGEKARAHA. Residues Cys-890, Cys-895, Cys-906, Cys-909, Cys-914, His-917, His-923, and Cys-925 each contribute to the Zn(2+) site. Positions 943 to 988 are disordered; sequence LYAGSGTKDRALDPAKRAQLQRKLDKKLGELSSQRTSKKKEKERGT. A compositionally biased stretch (basic and acidic residues) spans 949–971; that stretch reads TKDRALDPAKRAQLQRKLDKKLG. The stretch at 957-986 forms a coiled coil; the sequence is AKRAQLQRKLDKKLGELSSQRTSKKKEKER.

Belongs to the DNA2/NAM7 helicase family. As to quaternary structure, homooligomer. Interacts with RUVBL1. Interacts with RUVBL2. Interacts with GTF3C1. Interacts with ABT1. Interacts with ribosomes. In terms of tissue distribution, expressed in liver, skin, muscle, heart, brain, spleen and kidney.

It localises to the nucleus. The protein resides in the cytoplasm. Its subcellular location is the cell projection. It is found in the axon. It catalyses the reaction ATP + H2O = ADP + phosphate + H(+). In terms of biological role, 5' to 3' helicase that unwinds RNA and DNA duplexes in an ATP-dependent reaction. Specific to 5'-phosphorylated single-stranded guanine-rich sequences. May play a role in RNA metabolism, ribosome biogenesis or initiation of translation. May play a role in regulation of transcription. Interacts with tRNA-Tyr. The protein is DNA-binding protein SMUBP-2 (Ighmbp2) of Rattus norvegicus (Rat).